A 365-amino-acid chain; its full sequence is MDNVQEHDPDTQEHNNETQNHKQEDHSNSYQTRTIPFIEPLSREYQKRIILCQTVNGPCPIIALSNALILKSNVDRPFELPKKRYITPDELTEYLVEFAKAYGLCKNQQSLQDKLTSMHFGQQLNPCLYDIEKFEYGHEIFCTFGVRLVHGWILSDDMGLSDEDLSYLRKLEYYEKVADTFAERRSLLEMQEPLTEQQQDFLNNSTCVDKVMENRYTMQFLTNAGLKKILELVGPGEIVVVFRSSHFSTMYSNPDSFAQFTLVTDSGYARTGEDVVWETFDSQTVETGNGELCAANFIPAVYVLNQRKEEKKKRAKDDEQYAKRLAKEEEERGKKETPKKASNTPRRNKSNTQKSRKQSENCLIS.

2 stretches are compositionally biased toward basic and acidic residues: residues 1 to 27 and 315 to 339; these read MDNVQEHDPDTQEHNNETQNHKQEDHS and AKDDEQYAKRLAKEEEERGKKETPK. Disordered regions lie at residues 1–31 and 308–365; these read MDNVQEHDPDTQEHNNETQNHKQEDHSNSYQ and KEEK…CLIS. The segment covering 340–353 has biased composition (polar residues); that stretch reads KASNTPRRNKSNTQ.

To yeast YGL082w. Interacts with sad1.

It is found in the cytoplasm. This is an uncharacterized protein from Schizosaccharomyces pombe (strain 972 / ATCC 24843) (Fission yeast).